Consider the following 430-residue polypeptide: tRNA(Ile)-lysidine synthase (430 aa).

S27–S32 contributes to the ATP binding site.

The protein belongs to the tRNA(Ile)-lysidine synthase family.

It is found in the cytoplasm. It carries out the reaction cytidine(34) in tRNA(Ile2) + L-lysine + ATP = lysidine(34) in tRNA(Ile2) + AMP + diphosphate + H(+). Its function is as follows. Ligates lysine onto the cytidine present at position 34 of the AUA codon-specific tRNA(Ile) that contains the anticodon CAU, in an ATP-dependent manner. Cytidine is converted to lysidine, thus changing the amino acid specificity of the tRNA from methionine to isoleucine. This is tRNA(Ile)-lysidine synthase from Rickettsia bellii (strain RML369-C).